The following is a 437-amino-acid chain: Indole diterpene prenyltransferase anaPT (437 aa).

The segment at 1–28 (MSPLSMQTDSVQGTAENKSLETNGTSND) is disordered. L-tryptophan-binding positions include 102-103 (GF) and E111. 8 residues coordinate dimethylallyl diphosphate: R124, K208, Y210, Y282, Q355, Y357, Y422, and Y426.

This sequence belongs to the tryptophan dimethylallyltransferase family.

The enzyme catalyses (R)-benzodiazepinedione + dimethylallyl diphosphate = (2R,3S,11R)-aszonalenin + diphosphate. The catalysed reaction is (S)-benzodiazepinedione + dimethylallyl diphosphate = (2R,3S,11S)-aszonalenin + diphosphate. It functions in the pathway alkaloid biosynthesis. In terms of biological role, indole diterpene prenyltransferase; part of the gene cluster that mediates the biosynthesis of the prenylated pyrroloindoline diketopiperazine acetylaszonalenin. The first step in the pathway is the formation of (R)-benzodiazepinedione by condensation of tryptophan and anthranilic acid catalyzed by the non-ribosomal peptide synthetase anaPS. The prenyltransferase anaPT then converts (R)-benzodiazepinedione to aszonalenin in the presence of dimethylallyl diphosphate (DMAPP) via C3-prenylation. The last step in the biosynthesis of acetylaszonalenin via acetylation of aszonalenin at position N1 catalyzed by anaAT. The chain is Indole diterpene prenyltransferase anaPT from Neosartorya fischeri (strain ATCC 1020 / DSM 3700 / CBS 544.65 / FGSC A1164 / JCM 1740 / NRRL 181 / WB 181) (Aspergillus fischerianus).